Here is a 917-residue protein sequence, read N- to C-terminus: Spermatogenesis-associated protein 31D3 (917 aa).

Residues 29 to 49 form a helical membrane-spanning segment; sequence FICLSGLGLFILYLFYMVLTL. 3 disordered regions span residues 55 to 80, 152 to 195, and 773 to 797; these read EKNNDTQKHQGRARRKRKSVTFKDRK, SVSP…PPPL, and SQETAPKNHLLHDPETSSEEDLRSN. A compositionally biased stretch (basic residues) spans 63–74; the sequence is HQGRARRKRKSV. Low complexity predominate over residues 152 to 163; it reads SVSPLASSASGA. Polar residues predominate over residues 164 to 177; the sequence is ESSFTLASTPSATT. Residues 782-797 show a composition bias toward basic and acidic residues; it reads LLHDPETSSEEDLRSN.

It belongs to the SPATA31 family.

The protein resides in the membrane. May play a role in spermatogenesis. The sequence is that of Spermatogenesis-associated protein 31D3 (SPATA31D3) from Homo sapiens (Human).